A 66-amino-acid chain; its full sequence is Large ribosomal subunit protein bL31 (66 aa).

Residues cysteine 16, cysteine 18, cysteine 36, and cysteine 39 each coordinate Zn(2+).

Belongs to the bacterial ribosomal protein bL31 family. Type A subfamily. Part of the 50S ribosomal subunit. Zn(2+) serves as cofactor.

Binds the 23S rRNA. The sequence is that of Large ribosomal subunit protein bL31 from Bacillus licheniformis (strain ATCC 14580 / DSM 13 / JCM 2505 / CCUG 7422 / NBRC 12200 / NCIMB 9375 / NCTC 10341 / NRRL NRS-1264 / Gibson 46).